We begin with the raw amino-acid sequence, 494 residues long: Alpha-amylase-related protein (494 aa).

The first 20 residues, 1 to 20, serve as a signal peptide directing secretion; it reads MIKFALALTLCLAGASLSLA. The residue at position 21 (Gln-21) is a Pyrrolidone carboxylic acid. An intrachain disulfide couples Cys-48 to Cys-104. The Ca(2+) site is built by Asn-118, Gln-169, and Asp-178. Cys-157 and Cys-171 form a disulfide bridge. A chloride-binding site is contributed by Arg-206. Residue Asp-208 is the Nucleophile of the active site. Residue His-212 participates in Ca(2+) binding. Catalysis depends on Glu-245, which acts as the Proton donor. Chloride is bound by residues Asn-308 and Arg-343. 3 cysteine pairs are disulfide-bonded: Cys-376-Cys-382, Cys-418-Cys-441, and Cys-448-Cys-460.

Belongs to the glycosyl hydrolase 13 family. In terms of assembly, monomer. Ca(2+) is required as a cofactor. The cofactor is chloride.

It is found in the secreted. The catalysed reaction is Endohydrolysis of (1-&gt;4)-alpha-D-glucosidic linkages in polysaccharides containing three or more (1-&gt;4)-alpha-linked D-glucose units.. This Drosophila serrata (Fruit fly) protein is Alpha-amylase-related protein (Amyrel).